The primary structure comprises 353 residues: Protein RecA (353 aa).

67–74 (GPESSGKT) provides a ligand contact to ATP.

This sequence belongs to the RecA family.

It is found in the cytoplasm. In terms of biological role, can catalyze the hydrolysis of ATP in the presence of single-stranded DNA, the ATP-dependent uptake of single-stranded DNA by duplex DNA, and the ATP-dependent hybridization of homologous single-stranded DNAs. It interacts with LexA causing its activation and leading to its autocatalytic cleavage. The chain is Protein RecA from Shewanella loihica (strain ATCC BAA-1088 / PV-4).